Here is a 101-residue protein sequence, read N- to C-terminus: Small ribosomal subunit protein uS14 (101 aa).

Belongs to the universal ribosomal protein uS14 family. Part of the 30S ribosomal subunit. Contacts proteins S3 and S10.

Its function is as follows. Binds 16S rRNA, required for the assembly of 30S particles and may also be responsible for determining the conformation of the 16S rRNA at the A site. This Pseudomonas putida (strain ATCC 47054 / DSM 6125 / CFBP 8728 / NCIMB 11950 / KT2440) protein is Small ribosomal subunit protein uS14.